Reading from the N-terminus, the 78-residue chain is MAKVPVRKPKKKQNPLKAAKIEAVDYKDTALLRKFISDRGKIRARRVTGVSVQEQRQIAKAIKNAREMALLPYSSSAR.

It belongs to the bacterial ribosomal protein bS18 family. As to quaternary structure, part of the 30S ribosomal subunit. Forms a tight heterodimer with protein bS6.

Functionally, binds as a heterodimer with protein bS6 to the central domain of the 16S rRNA, where it helps stabilize the platform of the 30S subunit. This chain is Small ribosomal subunit protein bS18, found in Kineococcus radiotolerans (strain ATCC BAA-149 / DSM 14245 / SRS30216).